The chain runs to 206 residues: Transmembrane emp24 domain-containing protein bai (206 aa).

An N-terminal signal peptide occupies residues 1 to 20; it reads MLKVLYVIFTIFGYIWPIYS. Residues 21–172 are Lumenal-facing; sequence VMFHLTPNTQ…RDTNEKTNSR (152 aa). The GOLD domain maps to 30-140; the sequence is QKCLKEDIQA…LKPLEVDLKR (111 aa). The helical transmembrane segment at 173–193 threads the bilayer; sequence VLFFSIFSMCCLLGLATWQVL. Over 194-206 the chain is Cytoplasmic; that stretch reads YLRRYFKAKKLIE.

It belongs to the EMP24/GP25L family.

The protein localises to the membrane. In terms of biological role, eca and bai are essential, though not redundant, for dorsoventral patterning of the embryo. Specifically required during early embryogenesis for the activity of maternal tkv, while the zygotic tkv is not affected. The sequence is that of Transmembrane emp24 domain-containing protein bai from Drosophila virilis (Fruit fly).